The primary structure comprises 231 residues: Class A basic helix-loop-helix protein 9 (231 aa).

Residues 61–113 (ARRMAANVRERKRILDYNEAFNALRRALQHDLGGKRLSKIATLRRAIHRITAL) enclose the bHLH domain. The segment at 135–168 (QAAQGSSTGNSSFSVPRSAPSPIAPSLTRRDIAS) is disordered. A compositionally biased stretch (polar residues) spans 137-149 (AQGSSTGNSSFSV).

As to quaternary structure, heterodimer. Efficient DNA binding requires dimerization with another bHLH protein. Interacts with TCF3, TCF4, and TCF12.

It is found in the nucleus. Transcription factor, which play a role in limb development. Is an essential player in the regulatory network governing transcription of genes implicated in limb morphogenesis. The protein is Class A basic helix-loop-helix protein 9 (Bhlha9) of Mus musculus (Mouse).